We begin with the raw amino-acid sequence, 299 residues long: Tyrosine recombinase XerC (299 aa).

The Core-binding (CB) domain occupies 1 to 85; that stretch reads MQADLDAFLD…ALRGFYRYLL (85 aa). The 180-residue stretch at 106-285 folds into the Tyr recombinase domain; it reads RLPRTLDADR…DFQHLAAVYD (180 aa). Residues R146, K170, H237, R240, and H263 contribute to the active site. Y272 functions as the O-(3'-phospho-DNA)-tyrosine intermediate in the catalytic mechanism.

The protein belongs to the 'phage' integrase family. XerC subfamily. As to quaternary structure, forms a cyclic heterotetrameric complex composed of two molecules of XerC and two molecules of XerD.

It is found in the cytoplasm. In terms of biological role, site-specific tyrosine recombinase, which acts by catalyzing the cutting and rejoining of the recombining DNA molecules. The XerC-XerD complex is essential to convert dimers of the bacterial chromosome into monomers to permit their segregation at cell division. It also contributes to the segregational stability of plasmids. In Azotobacter vinelandii (strain DJ / ATCC BAA-1303), this protein is Tyrosine recombinase XerC.